Reading from the N-terminus, the 95-residue chain is TBK1 inhibitor DP96R (95 aa).

It belongs to the asfivirus DP96R family.

Functionally, inhibits cGAS-STING-mediated type I IFN expression and NF-kB activation by inhibiting TBK1 and IKBKB/IKKB. Inhibits host TBK1 phosphorylation. This is TBK1 inhibitor DP96R from Ornithodoros (relapsing fever ticks).